A 398-amino-acid chain; its full sequence is Serine/threonine-protein kinase UL13 (398 aa).

The span at 1-10 (MAAGGGGGGV) shows a compositional bias: gly residues. The tract at residues 1-44 (MAAGGGGGGVSRAALARPPIHRGTSAPGGAIAAAGGDGDGDEAS) is disordered. The Protein kinase domain occupies 80-398 (TGDPVAVGAG…GGARFAELAA (319 aa)). Residues 86 to 94 (VGAGSYGSV) and Lys103 contribute to the ATP site. Residue Asp194 is the Proton acceptor of the active site.

The protein belongs to the protein kinase superfamily. Ser/Thr protein kinase family. In terms of processing, autophosphorylated.

It is found in the virion tegument. It localises to the host nucleus. The protein localises to the host cytoplasm. The protein resides in the host endoplasmic reticulum. The catalysed reaction is L-seryl-[protein] + ATP = O-phospho-L-seryl-[protein] + ADP + H(+). The enzyme catalyses L-threonyl-[protein] + ATP = O-phospho-L-threonyl-[protein] + ADP + H(+). In terms of biological role, multifunctional serine/threonine kinase that plays a role in several processes including egress of virus particles from the nucleus, modulation of the actin cytoskeleton and regulation of viral and cellular gene expression. Regulates the nuclear localization of viral envelopment factors UL34 and UL31, by phosphorylating the US3 kinase, indicating a role in nuclear egress. Disrupts host nuclear lamins, including LMNA and LMNB1. Phosphorylates the viral Fc receptor composed of glycoproteins E (gE) and I (gI). Phosphorylation of glycoprotein E (gE) by UL13 alters its subcellular localization, from the host early endosome to the plasma membrane. Participates in the transcriptional regulation of cellular and viral mRNAs mainly by phosphorylating the viral transcriptional regulator ICP22. Functions as an antagonist of the host RLR-mediated antiviral responses via suppression of the transcription of cytosolic receptors RIGI and IFIH1. Facilitates immune evasion also by recruiting host RNF5 to initiate the 'Lys-27'-/'Lys-29'-linked polyubiquitination of STING1; leading to its degradation. Blocks host IFN-beta transactivation mediated by the cGAS-STING pathway by phosphorylating host IRF3. In turn, IRF3 binding to the IRF3-responsive promoters and downstream interferon stimulated genes/ISG expression are greatly impaired. Induces the activation of the host DNA damage response via H2AX phosphorylation to improve efficient viral replication and progeny production. The sequence is that of Serine/threonine-protein kinase UL13 (UL13) from Suid herpesvirus 1 (strain NIA-3) (SuHV-1).